The sequence spans 55 residues: Large ribosomal subunit protein bL33 (55 aa).

Belongs to the bacterial ribosomal protein bL33 family.

This chain is Large ribosomal subunit protein bL33, found in Alcanivorax borkumensis (strain ATCC 700651 / DSM 11573 / NCIMB 13689 / SK2).